We begin with the raw amino-acid sequence, 277 residues long: Undecaprenyl-diphosphatase (277 aa).

6 helical membrane-spanning segments follow: residues phenylalanine 47–isoleucine 67, valine 85–isoleucine 105, tryptophan 108–tryptophan 128, alanine 183–serine 203, valine 218–leucine 238, and phenylalanine 249–isoleucine 269.

This sequence belongs to the UppP family.

The protein resides in the cell inner membrane. It carries out the reaction di-trans,octa-cis-undecaprenyl diphosphate + H2O = di-trans,octa-cis-undecaprenyl phosphate + phosphate + H(+). Catalyzes the dephosphorylation of undecaprenyl diphosphate (UPP). Confers resistance to bacitracin. In Pseudomonas paraeruginosa (strain DSM 24068 / PA7) (Pseudomonas aeruginosa (strain PA7)), this protein is Undecaprenyl-diphosphatase.